The primary structure comprises 158 residues: Crossover junction endodeoxyribonuclease RuvC (158 aa).

Catalysis depends on residues Asp7, Glu66, and Asp139. Mg(2+)-binding residues include Asp7, Glu66, and Asp139.

Belongs to the RuvC family. Homodimer which binds Holliday junction (HJ) DNA. The HJ becomes 2-fold symmetrical on binding to RuvC with unstacked arms; it has a different conformation from HJ DNA in complex with RuvA. In the full resolvosome a probable DNA-RuvA(4)-RuvB(12)-RuvC(2) complex forms which resolves the HJ. The cofactor is Mg(2+).

Its subcellular location is the cytoplasm. The enzyme catalyses Endonucleolytic cleavage at a junction such as a reciprocal single-stranded crossover between two homologous DNA duplexes (Holliday junction).. Its function is as follows. The RuvA-RuvB-RuvC complex processes Holliday junction (HJ) DNA during genetic recombination and DNA repair. Endonuclease that resolves HJ intermediates. Cleaves cruciform DNA by making single-stranded nicks across the HJ at symmetrical positions within the homologous arms, yielding a 5'-phosphate and a 3'-hydroxyl group; requires a central core of homology in the junction. The consensus cleavage sequence is 5'-(A/T)TT(C/G)-3'. Cleavage occurs on the 3'-side of the TT dinucleotide at the point of strand exchange. HJ branch migration catalyzed by RuvA-RuvB allows RuvC to scan DNA until it finds its consensus sequence, where it cleaves and resolves the cruciform DNA. In Carboxydothermus hydrogenoformans (strain ATCC BAA-161 / DSM 6008 / Z-2901), this protein is Crossover junction endodeoxyribonuclease RuvC.